A 67-amino-acid polypeptide reads, in one-letter code: ATP synthase protein 8 (67 aa).

A helical membrane pass occupies residues T8 to F24. An N6-acetyllysine; alternate modification is found at K54. Position 54 is an N6-succinyllysine; alternate (K54). K57 carries the N6-acetyllysine modification.

The protein belongs to the ATPase protein 8 family. In terms of assembly, F-type ATPases have 2 components, CF(1) - the catalytic core - and CF(0) - the membrane proton channel. Component of an ATP synthase complex composed of ATP5PB, ATP5MC1, ATP5F1E, ATP5PD, ATP5ME, ATP5PF, ATP5MF, MT-ATP6, MT-ATP8, ATP5F1A, ATP5F1B, ATP5F1D, ATP5F1C, ATP5PO, ATP5MG, ATP5MK and ATP5MJ. Interacts with PRICKLE3.

The protein localises to the mitochondrion membrane. Mitochondrial membrane ATP synthase (F(1)F(0) ATP synthase or Complex V) produces ATP from ADP in the presence of a proton gradient across the membrane which is generated by electron transport complexes of the respiratory chain. F-type ATPases consist of two structural domains, F(1) - containing the extramembraneous catalytic core and F(0) - containing the membrane proton channel, linked together by a central stalk and a peripheral stalk. During catalysis, ATP synthesis in the catalytic domain of F(1) is coupled via a rotary mechanism of the central stalk subunits to proton translocation. Part of the complex F(0) domain. Minor subunit located with subunit a in the membrane. This Rhinoceros unicornis (Greater Indian rhinoceros) protein is ATP synthase protein 8 (MT-ATP8).